The sequence spans 719 residues: Aminodeoxychorismate synthase (719 aa).

The region spanning 5–199 is the Glutamine amidotransferase type-1 domain; the sequence is RTLLIDNYDS…RDLSLRAAGH (195 aa). Catalysis depends on C86, which acts as the Nucleophile. Active-site residues include H173 and E175. The disordered stretch occupies residues 199 to 224; it reads HRPPHTERIPAPAPAPAPAPAPAPPA. A compositionally biased stretch (pro residues) spans 209-224; sequence APAPAPAPAPAPAPPA.

In the C-terminal section; belongs to the anthranilate synthase component I family.

The catalysed reaction is chorismate + L-glutamine = 4-amino-4-deoxychorismate + L-glutamate. It participates in antibiotic biosynthesis. In terms of biological role, involved in pristinamycin I biosynthesis. Catalyzes the biosynthesis of 4-amino-4-deoxychorismate (ADC) from chorismate and glutamine. The protein is Aminodeoxychorismate synthase of Streptomyces pristinaespiralis.